A 375-amino-acid chain; its full sequence is Putative disease resistance protein At3g15700 (375 aa).

The stretch at lysine 17–glutamine 49 forms a coiled coil. Residues aspartate 158–glycine 372 form the NB-ARC domain. Glycine 167–threonine 174 contacts ATP.

Functionally, potential disease resistance protein. This chain is Putative disease resistance protein At3g15700, found in Arabidopsis thaliana (Mouse-ear cress).